A 67-amino-acid polypeptide reads, in one-letter code: DNA gyrase inhibitor YacG (67 aa).

Positions 8, 11, 27, and 31 each coordinate Zn(2+).

It belongs to the DNA gyrase inhibitor YacG family. Interacts with GyrB. Requires Zn(2+) as cofactor.

In terms of biological role, inhibits all the catalytic activities of DNA gyrase by preventing its interaction with DNA. Acts by binding directly to the C-terminal domain of GyrB, which probably disrupts DNA binding by the gyrase. This chain is DNA gyrase inhibitor YacG, found in Ralstonia pickettii (strain 12J).